We begin with the raw amino-acid sequence, 169 residues long: GYLGAPAVYAPGAPIAARAYAAPVAYAAPALRAAPVAYAAPAVAKVAAPVAYAAPAAVAAEYDPNPQYSYAYNVQDALTGDSKAQQETRDGDVVQGSYSLVEPDGSIRTVDYTADPVNGFNAVVHKEAGAHPAPVVAKVAAPVAYAAPAIAKVAAPLAYAAPAYGKASH.

Repeat copies occupy residues 21–24 (AAPV), 27–30 (AAPA), 33–36 (AAPV), 39–42 (AAPA), 47–50 (AAPV), and 53–56 (AAPA). One can recognise a Chitin-binding type R&amp;R domain in the interval 65–135 (NPQYSYAYNV…KEAGAHPAPV (71 aa)). 3 repeat units span residues 140–143 (AAPV), 146–149 (AAPA), and 160–163 (AAPA).

Functionally, component of the cuticle of migratory locust which contains more than 100 different structural proteins. The sequence is that of Cuticle protein 21 (ACP21) from Locusta migratoria (Migratory locust).